The primary structure comprises 340 residues: 2-deoxy-scyllo-inosamine dehydrogenase (340 aa).

Positions 37, 59, 89, 92, 95, 103, and 144 each coordinate Zn(2+).

It belongs to the zinc-containing alcohol dehydrogenase family. DOIA dehydrogenase subfamily. The cofactor is Zn(2+).

It catalyses the reaction 2-deoxy-scyllo-inosamine + NADP(+) = 3-amino-2,3-dideoxy-scyllo-inosose + NADPH + H(+). It carries out the reaction 2-deoxy-scyllo-inosamine + NAD(+) = 3-amino-2,3-dideoxy-scyllo-inosose + NADH + H(+). The protein operates within metabolic intermediate biosynthesis; 2-deoxystreptamine biosynthesis; 2-deoxystreptamine from D-glucose 6-phosphate: step 3/4. It participates in antibiotic biosynthesis; neomycin biosynthesis. In terms of biological role, catalyzes the oxidation of 2-deoxy-scyllo-inosamine (DOIA) with NAD(+) or NADP(+), forming 3-amino-2,3-dideoxy-scyllo-inosose (amino-DOI). The polypeptide is 2-deoxy-scyllo-inosamine dehydrogenase (neoA) (Streptomyces fradiae (Streptomyces roseoflavus)).